The chain runs to 481 residues: Cys-Gly metallodipeptidase DUG1 (481 aa).

Position 102 (histidine 102) interacts with Zn(2+). Aspartate 104 is an active-site residue. Aspartate 137 contributes to the Zn(2+) binding site. The active-site Proton acceptor is the glutamate 171. The Zn(2+) site is built by glutamate 172, aspartate 200, and histidine 450. Position 451 is a phosphoserine (serine 451).

Belongs to the peptidase M20A family. As to quaternary structure, homodimer. Component of the GSH degradosomal complex composed of at least DUG1, DUG2 and DUG3. The cofactor is Zn(2+). Mn(2+) serves as cofactor.

Its subcellular location is the cytoplasm. The protein resides in the mitochondrion. Its function is as follows. Catalytic component of the GSH degradosomal complex involved in the degradation of glutathione (GSH) and other peptides containing a gamma-glu-X bond. Also functions in a DUG2-DUG3-independent manner as a dipeptidase with high specificity for Cys-Gly and no activity toward tri- or tetrapeptides. The chain is Cys-Gly metallodipeptidase DUG1 (DUG1) from Saccharomyces cerevisiae (strain ATCC 204508 / S288c) (Baker's yeast).